A 431-amino-acid polypeptide reads, in one-letter code: Enolase (431 aa).

Gln167 is a (2R)-2-phosphoglycerate binding site. Residue Glu209 is the Proton donor of the active site. 3 residues coordinate Mg(2+): Asp246, Glu289, and Asp316. (2R)-2-phosphoglycerate-binding residues include Lys341, Arg370, Ser371, and Lys392. The active-site Proton acceptor is Lys341.

The protein belongs to the enolase family. As to quaternary structure, component of the RNA degradosome, a multiprotein complex involved in RNA processing and mRNA degradation. Mg(2+) is required as a cofactor.

It is found in the cytoplasm. It localises to the secreted. Its subcellular location is the cell surface. It catalyses the reaction (2R)-2-phosphoglycerate = phosphoenolpyruvate + H2O. Its pathway is carbohydrate degradation; glycolysis; pyruvate from D-glyceraldehyde 3-phosphate: step 4/5. In terms of biological role, catalyzes the reversible conversion of 2-phosphoglycerate (2-PG) into phosphoenolpyruvate (PEP). It is essential for the degradation of carbohydrates via glycolysis. The polypeptide is Enolase (Marinobacter nauticus (strain ATCC 700491 / DSM 11845 / VT8) (Marinobacter aquaeolei)).